The chain runs to 115 residues: T cell receptor beta variable 11-2 (115 aa).

The signal sequence occupies residues Met-1–Ala-21. The 94-residue stretch at Gly-22–Leu-115 folds into the Ig-like domain. A disulfide bridge links Cys-42 with Cys-111.

As to quaternary structure, alpha-beta TR is a heterodimer composed of an alpha and beta chain; disulfide-linked. The alpha-beta TR is associated with the transmembrane signaling CD3 coreceptor proteins to form the TR-CD3 (TcR or TCR). The assembly of alpha-beta TR heterodimers with CD3 occurs in the endoplasmic reticulum where a single alpha-beta TR heterodimer associates with one CD3D-CD3E heterodimer, one CD3G-CD3E heterodimer and one CD247 homodimer forming a stable octameric structure. CD3D-CD3E and CD3G-CD3E heterodimers preferentially associate with TR alpha and TR beta chains, respectively. The association of the CD247 homodimer is the last step of TcR assembly in the endoplasmic reticulum and is required for transport to the cell surface.

It is found in the cell membrane. Functionally, v region of the variable domain of T cell receptor (TR) beta chain that participates in the antigen recognition. Alpha-beta T cell receptors are antigen specific receptors which are essential to the immune response and are present on the cell surface of T lymphocytes. Recognize peptide-major histocompatibility (MH) (pMH) complexes that are displayed by antigen presenting cells (APC), a prerequisite for efficient T cell adaptive immunity against pathogens. Binding of alpha-beta TR to pMH complex initiates TR-CD3 clustering on the cell surface and intracellular activation of LCK that phosphorylates the ITAM motifs of CD3G, CD3D, CD3E and CD247 enabling the recruitment of ZAP70. In turn ZAP70 phosphorylates LAT, which recruits numerous signaling molecules to form the LAT signalosome. The LAT signalosome propagates signal branching to three major signaling pathways, the calcium, the mitogen-activated protein kinase (MAPK) kinase and the nuclear factor NF-kappa-B (NF-kB) pathways, leading to the mobilization of transcription factors that are critical for gene expression and essential for T cell growth and differentiation. The T cell repertoire is generated in the thymus, by V-(D)-J rearrangement. This repertoire is then shaped by intrathymic selection events to generate a peripheral T cell pool of self-MH restricted, non-autoaggressive T cells. Post-thymic interaction of alpha-beta TR with the pMH complexes shapes TR structural and functional avidity. This is T cell receptor beta variable 11-2 from Homo sapiens (Human).